Reading from the N-terminus, the 435-residue chain is Light-independent protochlorophyllide reductase subunit N (435 aa).

[4Fe-4S] cluster is bound by residues Cys23, Cys48, and Cys108.

Belongs to the BchN/ChlN family. Protochlorophyllide reductase is composed of three subunits; ChlL, ChlN and ChlB. Forms a heterotetramer of two ChlB and two ChlN subunits. Requires [4Fe-4S] cluster as cofactor.

It is found in the plastid. It localises to the chloroplast. It carries out the reaction chlorophyllide a + oxidized 2[4Fe-4S]-[ferredoxin] + 2 ADP + 2 phosphate = protochlorophyllide a + reduced 2[4Fe-4S]-[ferredoxin] + 2 ATP + 2 H2O. Its pathway is porphyrin-containing compound metabolism; chlorophyll biosynthesis (light-independent). Its function is as follows. Component of the dark-operative protochlorophyllide reductase (DPOR) that uses Mg-ATP and reduced ferredoxin to reduce ring D of protochlorophyllide (Pchlide) to form chlorophyllide a (Chlide). This reaction is light-independent. The NB-protein (ChlN-ChlB) is the catalytic component of the complex. The sequence is that of Light-independent protochlorophyllide reductase subunit N from Chlorella vulgaris (Green alga).